Reading from the N-terminus, the 253-residue chain is 5'-nucleotidase SurE (253 aa).

4 residues coordinate a divalent metal cation: D8, D9, S39, and N92.

This sequence belongs to the SurE nucleotidase family. It depends on a divalent metal cation as a cofactor.

Its subcellular location is the cytoplasm. It catalyses the reaction a ribonucleoside 5'-phosphate + H2O = a ribonucleoside + phosphate. Its function is as follows. Nucleotidase that shows phosphatase activity on nucleoside 5'-monophosphates. This is 5'-nucleotidase SurE from Burkholderia vietnamiensis (strain G4 / LMG 22486) (Burkholderia cepacia (strain R1808)).